We begin with the raw amino-acid sequence, 66 residues long: MSNALTNIFYKYVARRNSTWMAGAILGAFVLDSTVSGAVNTFFDSVNKGKLWKDVYAERVKKGISQ.

At 1–20 (MSNALTNIFYKYVARRNSTW) the chain is on the mitochondrial matrix side. Residues 21-46 (MAGAILGAFVLDSTVSGAVNTFFDSV) traverse the membrane as a helical segment. The Mitochondrial intermembrane segment spans residues 47–66 (NKGKLWKDVYAERVKKGISQ).

Belongs to the UQCR10/QCR9 family. As to quaternary structure, component of the ubiquinol-cytochrome c oxidoreductase (cytochrome b-c1 complex, complex III, CIII), a multisubunit enzyme composed of 3 respiratory subunits cytochrome b, cytochrome c1 and Rieske protein, 2 core protein subunits, and additional low-molecular weight protein subunits. The complex exists as an obligatory dimer and forms supercomplexes (SCs) in the inner mitochondrial membrane with cytochrome c oxidase (complex IV, CIV).

The protein resides in the mitochondrion inner membrane. Functionally, component of the ubiquinol-cytochrome c oxidoreductase, a multisubunit transmembrane complex that is part of the mitochondrial electron transport chain which drives oxidative phosphorylation. The respiratory chain contains 3 multisubunit complexes succinate dehydrogenase (complex II, CII), ubiquinol-cytochrome c oxidoreductase (cytochrome b-c1 complex, complex III, CIII) and cytochrome c oxidase (complex IV, CIV), that cooperate to transfer electrons derived from NADH and succinate to molecular oxygen, creating an electrochemical gradient over the inner membrane that drives transmembrane transport and the ATP synthase. The cytochrome b-c1 complex catalyzes electron transfer from ubiquinol to cytochrome c, linking this redox reaction to translocation of protons across the mitochondrial inner membrane, with protons being carried across the membrane as hydrogens on the quinol. In the process called Q cycle, 2 protons are consumed from the matrix, 4 protons are released into the intermembrane space and 2 electrons are passed to cytochrome c. The sequence is that of Probable cytochrome b-c1 complex subunit 9 from Dictyostelium discoideum (Social amoeba).